A 183-amino-acid polypeptide reads, in one-letter code: UPF0134 protein MPN_100 (183 aa).

It belongs to the UPF0134 family.

The polypeptide is UPF0134 protein MPN_100 (Mycoplasma pneumoniae (strain ATCC 29342 / M129 / Subtype 1) (Mycoplasmoides pneumoniae)).